The sequence spans 507 residues: Maturase K (507 aa).

Belongs to the intron maturase 2 family. MatK subfamily.

It is found in the plastid. It localises to the chloroplast. Usually encoded in the trnK tRNA gene intron. Probably assists in splicing its own and other chloroplast group II introns. This chain is Maturase K, found in Fagopyrum tataricum (Tartarian buckwheat).